Consider the following 78-residue polypeptide: Glycophorin-E (78 aa).

The signal sequence occupies residues 1–19; the sequence is MYGKIIFVLLLSGIVSISA. At 20-52 the chain is on the extracellular side; sequence SSTTGVAMHTSTSSSVTKSYISSQTNGITLINW. The chain crosses the membrane as a helical span at residues 53–73; that stretch reads WAMARVIFEVMLVVVGMIILI. The Cytoplasmic segment spans residues 74–78; the sequence is SYCIR.

This sequence belongs to the glycophorin-A family. Post-translationally, the N-terminal extracellular domain is heavily glycosylated on serine and threonine residues. Erythrocytes.

It localises to the membrane. Its function is as follows. This protein is a minor sialoglycoprotein in human erythrocyte membranes. This chain is Glycophorin-E (GYPE), found in Homo sapiens (Human).